Consider the following 339-residue polypeptide: Glyceraldehyde-3-phosphate dehydrogenase (339 aa).

NAD(+)-binding positions include Arg12–Ile13, Asp35, and Lys84. D-glyceraldehyde 3-phosphate is bound by residues Ser155 to Thr157, Thr186, Thr215 to Gly216, and Arg238. The active-site Nucleophile is Cys156. An NAD(+)-binding site is contributed by Asn320.

This sequence belongs to the glyceraldehyde-3-phosphate dehydrogenase family. Homotetramer.

The protein localises to the cytoplasm. It catalyses the reaction D-glyceraldehyde 3-phosphate + phosphate + NAD(+) = (2R)-3-phospho-glyceroyl phosphate + NADH + H(+). Its pathway is carbohydrate degradation; glycolysis; pyruvate from D-glyceraldehyde 3-phosphate: step 1/5. This Mastigamoeba balamuthi (Phreatamoeba balamuthi) protein is Glyceraldehyde-3-phosphate dehydrogenase (GAPD).